The following is a 612-amino-acid chain: Phosphopentomutase (612 aa).

An N-acetylalanine modification is found at A2. Alpha-D-glucose 1,6-bisphosphate contacts are provided by R63 and S165. Residue S165 is the Phosphoserine intermediate of the active site. Positions 165, 322, 324, and 326 each coordinate Mg(2+). At S165 the chain carries Phosphoserine. The alpha-D-glucose 1,6-bisphosphate site is built by D326, R327, T400, E424, and K438.

It belongs to the phosphohexose mutase family. Monomer. It depends on Mg(2+) as a cofactor.

It localises to the cytoplasm. The protein resides in the cytosol. The catalysed reaction is alpha-D-ribose 1-phosphate = D-ribose 5-phosphate. It catalyses the reaction 2-deoxy-alpha-D-ribose 1-phosphate = 2-deoxy-D-ribose 5-phosphate. The enzyme catalyses alpha-D-glucose 1-phosphate = alpha-D-glucose 6-phosphate. It carries out the reaction O-phospho-L-seryl-[protein] + alpha-D-glucose 1-phosphate = alpha-D-glucose 1,6-bisphosphate + L-seryl-[protein]. The catalysed reaction is alpha-D-glucose 1,6-bisphosphate + L-seryl-[protein] = O-phospho-L-seryl-[protein] + alpha-D-glucose 6-phosphate. In terms of biological role, catalyzes the conversion of the nucleoside breakdown products ribose-1-phosphate and deoxyribose-1-phosphate to the corresponding 5-phosphopentoses. Catalyzes the reversible isomerization of alpha-D-glucose 1-phosphate to alpha-D-glucose 6-phosphate but with a lower catalytic efficiency. The mechanism proceeds via the intermediate compound alpha-D-glucose 1,6-bisphosphate. In vitro, also has a low glucose 1,6-bisphosphate synthase activity which is most probably not physiologically relevant. The chain is Phosphopentomutase (PGM2) from Pongo abelii (Sumatran orangutan).